The primary structure comprises 188 residues: Glutamyl endopeptidase 2 (188 aa).

Cysteine 14 and cysteine 34 form a disulfide bridge. Residues histidine 33, aspartate 62, and serine 143 each act as charge relay system in the active site. Cysteine 137 and cysteine 163 form a disulfide bridge.

This sequence belongs to the peptidase S1 family. Monomer.

The enzyme catalyses Preferential cleavage: -Glu-|-Xaa- &gt;&gt; -Asp-|-Xaa-. Preference for Pro or Leu at P2 and Phe at P3. Cleavage of -Glu-|-Asp- and -Glu-|-Pro- bonds is slow.. Functionally, preferentially cleaves peptide bonds on the carboxyl-terminal side of glutamate. The chain is Glutamyl endopeptidase 2 (sprE) from Streptomyces griseus.